A 549-amino-acid polypeptide reads, in one-letter code: FERM domain-containing protein 1 (549 aa).

Positions 1–40 (MAVPPRGRGIDPARTNPDTFPPSGARCMEPSPERPACSQQ) are disordered. Positions 54–369 (RDVLVLLPSR…DELELDLASR (316 aa)) constitute an FERM domain. Disordered stretches follow at residues 377 to 400 (SSQHCPHCLSRHSADSHGSSYTSG) and 422 to 464 (HGLH…GQSA). The segment covering 430 to 443 (SSSPRTSRSHPSTR) has biased composition (low complexity). Residues 444–462 (GDSQATRQEPCTQVRTRGQ) are compositionally biased toward polar residues.

The protein is FERM domain-containing protein 1 (FRMD1) of Homo sapiens (Human).